Reading from the N-terminus, the 452-residue chain is Retinoid-inducible serine carboxypeptidase (452 aa).

An N-terminal signal peptide occupies residues 1 to 28 (MELSRRICLVRLWLLLLSFLLGFSAGSA). N-linked (GlcNAc...) asparagine glycosylation is found at Asn-64, Asn-102, and Asn-126. Ser-167 is a catalytic residue. Asn-192 and Asn-362 each carry an N-linked (GlcNAc...) asparagine glycan. Residues Asp-371 and His-431 contribute to the active site.

Belongs to the peptidase S10 family. Highly expressed in aorta, bladder, and kidney with much lower levels in all other tissues analyzed. Expression in kidney is restricted to proximal convoluted tubules.

Its subcellular location is the secreted. Its function is as follows. May be involved in vascular wall and kidney homeostasis. In Rattus norvegicus (Rat), this protein is Retinoid-inducible serine carboxypeptidase (Scpep1).